A 192-amino-acid chain; its full sequence is Ion-translocating oxidoreductase complex subunit B (192 aa).

The tract at residues 1–26 (MNTIWIAVGALTFLGLVFGAILGYAS) is hydrophobic. The 4Fe-4S domain maps to 32–91 (EDDPVVEKIDAILPQSQCGQCGYPGCRPYAEAVGLQGEKINRCAPGGEAVMLKIADLLNV). Residues C49, C52, C57, C74, C117, C120, C123, C127, C147, C150, C153, and C157 each contribute to the [4Fe-4S] cluster site. 2 consecutive 4Fe-4S ferredoxin-type domains span residues 108-137 (MLAV…GATR) and 138-167 (AMHT…LRPV).

The protein belongs to the 4Fe4S bacterial-type ferredoxin family. RnfB subfamily. The complex is composed of six subunits: RsxA, RsxB, RsxC, RsxD, RsxE and RsxG. Requires [4Fe-4S] cluster as cofactor.

The protein resides in the cell inner membrane. In terms of biological role, part of a membrane-bound complex that couples electron transfer with translocation of ions across the membrane. Required to maintain the reduced state of SoxR. This Salmonella arizonae (strain ATCC BAA-731 / CDC346-86 / RSK2980) protein is Ion-translocating oxidoreductase complex subunit B.